The sequence spans 266 residues: Putative carbamate hydrolase RutD (266 aa).

It belongs to the AB hydrolase superfamily. Hydrolase RutD family.

It carries out the reaction carbamate + 2 H(+) = NH4(+) + CO2. Involved in pyrimidine catabolism. May facilitate the hydrolysis of carbamate, a reaction that can also occur spontaneously. The polypeptide is Putative carbamate hydrolase RutD (Escherichia coli O139:H28 (strain E24377A / ETEC)).